A 238-amino-acid chain; its full sequence is 3-dehydroquinate dehydratase (238 aa).

3-dehydroquinate-binding positions include 35–37 and arginine 70; that span reads ELR. The active-site Proton donor/acceptor is the histidine 133. Lysine 160 functions as the Schiff-base intermediate with substrate in the catalytic mechanism. 3-dehydroquinate-binding residues include arginine 202 and glutamine 225.

Belongs to the type-I 3-dehydroquinase family. In terms of assembly, homodimer.

It carries out the reaction 3-dehydroquinate = 3-dehydroshikimate + H2O. It participates in metabolic intermediate biosynthesis; chorismate biosynthesis; chorismate from D-erythrose 4-phosphate and phosphoenolpyruvate: step 3/7. In terms of biological role, involved in the third step of the chorismate pathway, which leads to the biosynthesis of aromatic amino acids. Catalyzes the cis-dehydration of 3-dehydroquinate (DHQ) and introduces the first double bond of the aromatic ring to yield 3-dehydroshikimate. The chain is 3-dehydroquinate dehydratase from Staphylococcus aureus (strain MRSA252).